The primary structure comprises 367 residues: MPEFVVTALLAPSRLSLKLLRALVMSLVYLAALVAAFVYSCIALTHVMCRPRRGCCGRQRLSPPECLRDPTLGEHCFLTLRVSVPPVKSSGLRLHYVSAGHGNGPLMLFLHGFPENWFSWRYQLREFQSHFHVVAVDMRGYSPSDAPKEVDCYTIDLLLDDIKDTILGLGYSKCILVSHDWGASLAWEFSIYYPSLVERMVVANGPPMSVIQEYSIHHIGQIFRSNYMFLFQLPWLPEKLLSMSDFQILKDTFTHRKNGIPGLTPSELEAFLYHFSQPGCLTGPINYYRNVFRNFPLEPKKLSTPTLLLWGEKDFAFQQGLVEAIGRHFVPGRLESHILPGSGHWIPQSHPQEMHQYMWAFLQDLLG.

A helical membrane pass occupies residues 22–42; the sequence is ALVMSLVYLAALVAAFVYSCI. The Nucleophile role is filled by aspartate 180. Residue tyrosine 288 is the Proton donor of the active site. The Proton acceptor role is filled by histidine 344.

The protein belongs to the AB hydrolase superfamily. Epoxide hydrolase family. Predominantly expressed in skin, esophagus, lung and tongue and to a lesser extent in pancreas and eye.

Its subcellular location is the microsome membrane. It carries out the reaction an epoxide + H2O = an ethanediol. The enzyme catalyses 9,10-epoxyoctadecanoate + H2O = 9,10-dihydroxyoctadecanoate. It catalyses the reaction 9,10-epoxy-(12Z)-octadecenoate + H2O = 9,10-dihydroxy-(12Z)-octadecenoate. The catalysed reaction is 8,9-epoxy-(5Z,11Z,14Z)-eicosatrienoate + H2O = 8,9-dihydroxy-(5Z,11Z,14Z)-eicosatrienoate. It carries out the reaction 11,12-epoxy-(5Z,8Z,14Z)-eicosatrienoate + H2O = 11,12-dihydroxy-(5Z,8Z,14Z)-eicosatrienoate. The enzyme catalyses 14,15-epoxy-(5Z,8Z,11Z)-eicosatrienoate + H2O = 14,15-dihydroxy-(5Z,8Z,11Z)-eicosatrienoate. Inhibited by 1-(1-acetylpiperidin-4-yl)-3-(4-(trifl uoromethoxy)phenyl)urea (TPAU), 1-cyclohexyl-3-dodecylurea (CDU), 12-(3-adamantan-1-yl-ureido)-dodecanoic acid (AUDA), 1-((3S, 5S, 7S)-adamantan-1-yl)-3-(5-(2-(2-ethoxyethoxy) ethoxy)pentyl)urea (AEPU) and to a lesser extent by 8-(3-((3S, 5S, 7S)-adamantan-1-yl)ureido) octanoic acid (AUOA). In terms of biological role, catalyzes the hydrolysis of epoxide-containing fatty acids. Active in vitro against epoxyeicosatrienoic acids (EETs) including 8,9-EET, 9,10-EET, 11,12-EET and 14,15-EET and leukotoxin. The protein is Epoxide hydrolase 3 (Ephx3) of Mus musculus (Mouse).